The sequence spans 417 residues: 3-isopropylmalate dehydratase large subunit (417 aa).

Positions 298, 358, and 361 each coordinate [4Fe-4S] cluster.

Belongs to the aconitase/IPM isomerase family. LeuC type 2 subfamily. As to quaternary structure, heterodimer of LeuC and LeuD. The cofactor is [4Fe-4S] cluster.

The enzyme catalyses (2R,3S)-3-isopropylmalate = (2S)-2-isopropylmalate. The protein operates within amino-acid biosynthesis; L-leucine biosynthesis; L-leucine from 3-methyl-2-oxobutanoate: step 2/4. In terms of biological role, catalyzes the isomerization between 2-isopropylmalate and 3-isopropylmalate, via the formation of 2-isopropylmaleate. The sequence is that of 3-isopropylmalate dehydratase large subunit from Thermoanaerobacter pseudethanolicus (strain ATCC 33223 / 39E) (Clostridium thermohydrosulfuricum).